The following is a 389-amino-acid chain: Galactokinase (389 aa).

A substrate-binding site is contributed by 34–37 (EHTD). Residues serine 68 and 125 to 131 (GSGLSSS) contribute to the ATP site. The Mg(2+) site is built by serine 131 and glutamate 163. Aspartate 175 serves as the catalytic Proton acceptor. A substrate-binding site is contributed by tyrosine 225.

It belongs to the GHMP kinase family. GalK subfamily.

The protein resides in the cytoplasm. It catalyses the reaction alpha-D-galactose + ATP = alpha-D-galactose 1-phosphate + ADP + H(+). It functions in the pathway carbohydrate metabolism; galactose metabolism. In terms of biological role, catalyzes the transfer of the gamma-phosphate of ATP to D-galactose to form alpha-D-galactose-1-phosphate (Gal-1-P). The polypeptide is Galactokinase (Clostridium beijerinckii (strain ATCC 51743 / NCIMB 8052) (Clostridium acetobutylicum)).